We begin with the raw amino-acid sequence, 74 residues long: Exodeoxyribonuclease 7 small subunit (74 aa).

This sequence belongs to the XseB family. As to quaternary structure, heterooligomer composed of large and small subunits.

It is found in the cytoplasm. It carries out the reaction Exonucleolytic cleavage in either 5'- to 3'- or 3'- to 5'-direction to yield nucleoside 5'-phosphates.. Bidirectionally degrades single-stranded DNA into large acid-insoluble oligonucleotides, which are then degraded further into small acid-soluble oligonucleotides. This is Exodeoxyribonuclease 7 small subunit from Symbiobacterium thermophilum (strain DSM 24528 / JCM 14929 / IAM 14863 / T).